A 491-amino-acid polypeptide reads, in one-letter code: Probable Xaa-Pro aminopeptidase An01g13040 (491 aa).

Residues aspartate 276, aspartate 287, glutamate 420, and glutamate 459 each contribute to the Mn(2+) site.

This sequence belongs to the peptidase M24B family. Mn(2+) serves as cofactor.

The enzyme catalyses Release of any N-terminal amino acid, including proline, that is linked to proline, even from a dipeptide or tripeptide.. Catalyzes the removal of a penultimate prolyl residue from the N-termini of peptides. This is Probable Xaa-Pro aminopeptidase An01g13040 from Aspergillus niger (strain ATCC MYA-4892 / CBS 513.88 / FGSC A1513).